A 184-amino-acid chain; its full sequence is Peptidyl-tRNA hydrolase (184 aa).

Tyr-17 is a binding site for tRNA. His-22 functions as the Proton acceptor in the catalytic mechanism. Phe-71, Asn-73, and Asn-119 together coordinate tRNA.

Belongs to the PTH family. As to quaternary structure, monomer.

The protein resides in the cytoplasm. The catalysed reaction is an N-acyl-L-alpha-aminoacyl-tRNA + H2O = an N-acyl-L-amino acid + a tRNA + H(+). Hydrolyzes ribosome-free peptidyl-tRNAs (with 1 or more amino acids incorporated), which drop off the ribosome during protein synthesis, or as a result of ribosome stalling. Functionally, catalyzes the release of premature peptidyl moieties from peptidyl-tRNA molecules trapped in stalled 50S ribosomal subunits, and thus maintains levels of free tRNAs and 50S ribosomes. The polypeptide is Peptidyl-tRNA hydrolase (Corynebacterium diphtheriae (strain ATCC 700971 / NCTC 13129 / Biotype gravis)).